Consider the following 320-residue polypeptide: Acetyl-coenzyme A carboxylase carboxyl transferase subunit alpha (320 aa).

One can recognise a CoA carboxyltransferase C-terminal domain in the interval 41–295 (SIEEKAAQAL…GDAIAGALND (255 aa)).

It belongs to the AccA family. Acetyl-CoA carboxylase is a heterohexamer composed of biotin carboxyl carrier protein (AccB), biotin carboxylase (AccC) and two subunits each of ACCase subunit alpha (AccA) and ACCase subunit beta (AccD).

The protein resides in the cytoplasm. It carries out the reaction N(6)-carboxybiotinyl-L-lysyl-[protein] + acetyl-CoA = N(6)-biotinyl-L-lysyl-[protein] + malonyl-CoA. The protein operates within lipid metabolism; malonyl-CoA biosynthesis; malonyl-CoA from acetyl-CoA: step 1/1. Component of the acetyl coenzyme A carboxylase (ACC) complex. First, biotin carboxylase catalyzes the carboxylation of biotin on its carrier protein (BCCP) and then the CO(2) group is transferred by the carboxyltransferase to acetyl-CoA to form malonyl-CoA. In Nitrobacter winogradskyi (strain ATCC 25391 / DSM 10237 / CIP 104748 / NCIMB 11846 / Nb-255), this protein is Acetyl-coenzyme A carboxylase carboxyl transferase subunit alpha.